Reading from the N-terminus, the 304-residue chain is 33 kDa chaperonin (304 aa).

2 disulfides stabilise this stretch: Cys-245/Cys-247 and Cys-278/Cys-281.

The protein belongs to the HSP33 family. Under oxidizing conditions two disulfide bonds are formed involving the reactive cysteines. Under reducing conditions zinc is bound to the reactive cysteines and the protein is inactive.

Its subcellular location is the cytoplasm. In terms of biological role, redox regulated molecular chaperone. Protects both thermally unfolding and oxidatively damaged proteins from irreversible aggregation. Plays an important role in the bacterial defense system toward oxidative stress. The polypeptide is 33 kDa chaperonin (Microcystis aeruginosa (strain NIES-843 / IAM M-2473)).